The following is a 365-amino-acid chain: Histidinol-phosphate aminotransferase (365 aa).

An N6-(pyridoxal phosphate)lysine modification is found at K227.

It belongs to the class-II pyridoxal-phosphate-dependent aminotransferase family. Histidinol-phosphate aminotransferase subfamily. In terms of assembly, homodimer. It depends on pyridoxal 5'-phosphate as a cofactor.

The enzyme catalyses L-histidinol phosphate + 2-oxoglutarate = 3-(imidazol-4-yl)-2-oxopropyl phosphate + L-glutamate. It participates in amino-acid biosynthesis; L-histidine biosynthesis; L-histidine from 5-phospho-alpha-D-ribose 1-diphosphate: step 7/9. This Polaromonas naphthalenivorans (strain CJ2) protein is Histidinol-phosphate aminotransferase.